Reading from the N-terminus, the 2147-residue chain is Non-reducing polyketide synthase albA (2147 aa).

The segment at 8–244 (YLFGDQTSDI…VKAPIHGPYH (237 aa)) is N-terminal acylcarrier protein transacylase domain (SAT). One can recognise a Ketosynthase family 3 (KS3) domain in the interval 375–806 (CSKIAIIGMS…GGNTAILLED (432 aa)). Catalysis depends on for beta-ketoacyl synthase activity residues C547, H682, and H724. A malonyl-CoA:ACP transacylase (MAT) domain region spans residues 912-1232 (FVFTGQGAQY…LSSLHLAGID (321 aa)). S1001 acts as the For acyl/malonyl transferase activity in catalysis. The tract at residues 1286–1425 (HEFLTTAAQK…CTVRFFDCAA (140 aa)) is N-terminal hotdog fold. In terms of domain architecture, PKS/mFAS DH spans 1286-1598 (HEFLTTAAQK…FQGLSRKILD (313 aa)). The segment at 1290–1603 (TTAAQKVIET…RKILDTVLPP (314 aa)) is product template (PT) domain. The Proton acceptor; for dehydratase activity role is filled by H1326. The segment at 1452–1598 (DAHRLGRGMV…FQGLSRKILD (147 aa)) is C-terminal hotdog fold. The Proton donor; for dehydratase activity role is filled by D1511. The segment at 1608-1637 (KGPARPAASAQKAAPAATSKSRASAPAPAK) is disordered. Over residues 1610–1637 (PARPAASAQKAAPAATSKSRASAPAPAK) the composition is skewed to low complexity. A Carrier 1 domain is found at 1642–1719 (PSAPSLVKRA…DFKQFLAPMS (78 aa)). S1679 bears the O-(pantetheine 4'-phosphoryl)serine mark. The interval 1719–1759 (SQGEASDGSTSDPESSSSFNGGSSTDESSAGSPVSSPPNEK) is disordered. Low complexity predominate over residues 1724 to 1747 (SDGSTSDPESSSSFNGGSSTDESS). One can recognise a Carrier 2 domain in the interval 1760–1837 (IEQHATMKEI…DVEDALGLKP (78 aa)). O-(pantetheine 4'-phosphoryl)serine is present on S1797. The interval 1873–2145 (SPHPRSTSIL…ELGSFIGNAM (273 aa)) is claisen cyclase domain. S1963 serves as the catalytic For Claisen cyclase activity.

The enzyme catalyses 6 malonyl-CoA + acetyl-CoA + 6 H(+) = naphtopyrone YWA1 + 6 CO2 + 7 CoA + H2O. It participates in secondary metabolite biosynthesis. In terms of biological role, non-reducing polyketide synthase involved in the biosynthesis of bifonsecin B, a dimeric gamma-naphthopyrone. The first step in the biosynthesis of bifonsecin B is the production of gamma-naphthopyrone precursor YWA1 by the non-reducing polyketide synthase albA, via condensation of one acetyl-CoA starter unit with 6 malonyl-CoA units. YWA1 is then methylated by bfoE at position C-6 to yield foncesin which is further methylated at position C-8 by bfoD to produce fonsecin B. A key enzyme in the biosynthetic pathway is the cytochrome P450 monooxygenase bfoB which catalyzes the oxidative dimerization of fonsecin B to bifonsecin B. Bfob also catalyzes the oxidative dimerization of rubrofusarin B into nigerone. The stereoselectivity of bfoB is influenced by the two natural monomeric substrates; homodimerization of fonsecin B yields a stereochemically pure biaryl, M-foncerine B, while rubrofusarin B yields a mixture of enantiomers M- and P-nigerone. The protein is Non-reducing polyketide synthase albA of Aspergillus brasiliensis (strain CBS 101740 / IMI 381727 / IBT 21946).